A 105-amino-acid polypeptide reads, in one-letter code: Met repressor (105 aa).

Belongs to the MetJ family. As to quaternary structure, homodimer.

Its subcellular location is the cytoplasm. This regulatory protein, when combined with SAM (S-adenosylmethionine) represses the expression of the methionine regulon and of enzymes involved in SAM synthesis. This is Met repressor from Citrobacter koseri (strain ATCC BAA-895 / CDC 4225-83 / SGSC4696).